Here is a 215-residue protein sequence, read N- to C-terminus: Ribosome maturation factor RimP (215 aa).

The disordered stretch occupies residues 180–215 (KDNRARKEAKKRRGEPDDDVPEGAEADATEEHEQES). Residues 195–207 (PDDDVPEGAEADA) are compositionally biased toward acidic residues.

This sequence belongs to the RimP family.

The protein localises to the cytoplasm. In terms of biological role, required for maturation of 30S ribosomal subunits. The polypeptide is Ribosome maturation factor RimP (Mesorhizobium japonicum (strain LMG 29417 / CECT 9101 / MAFF 303099) (Mesorhizobium loti (strain MAFF 303099))).